A 33-amino-acid polypeptide reads, in one-letter code: Phosphoglycerate kinase (33 aa).

Position 13 (Lys13) interacts with AMP. Lys13 contacts ATP.

This sequence belongs to the phosphoglycerate kinase family. As to quaternary structure, monomer. It depends on Mg(2+) as a cofactor.

It catalyses the reaction (2R)-3-phosphoglycerate + ATP = (2R)-3-phospho-glyceroyl phosphate + ADP. The chain is Phosphoglycerate kinase from Pseudotsuga menziesii (Douglas-fir).